The chain runs to 131 residues: Profilin-3 (131 aa).

A disulfide bond links Cys-13 and Cys-115. The Involved in PIP2 interaction signature appears at 81-97; sequence AVIRGKKGSGGITIKKT. Thr-111 bears the Phosphothreonine mark.

This sequence belongs to the profilin family. As to quaternary structure, occurs in many kinds of cells as a complex with monomeric actin in a 1:1 ratio. In terms of processing, phosphorylated by MAP kinases.

The protein localises to the cytoplasm. The protein resides in the cytoskeleton. In terms of biological role, binds to actin and affects the structure of the cytoskeleton. At high concentrations, profilin prevents the polymerization of actin, whereas it enhances it at low concentrations. This Olea europaea (Common olive) protein is Profilin-3.